The primary structure comprises 122 residues: Large ribosomal subunit protein uL14 (122 aa).

The protein belongs to the universal ribosomal protein uL14 family. Part of the 50S ribosomal subunit. Forms a cluster with proteins L3 and L19. In the 70S ribosome, L14 and L19 interact and together make contacts with the 16S rRNA in bridges B5 and B8.

Functionally, binds to 23S rRNA. Forms part of two intersubunit bridges in the 70S ribosome. The polypeptide is Large ribosomal subunit protein uL14 (Rickettsia canadensis (strain McKiel)).